Reading from the N-terminus, the 274-residue chain is 2-dehydro-3-deoxyphosphooctonate aldolase (274 aa).

The protein belongs to the KdsA family.

The protein resides in the cytoplasm. The catalysed reaction is D-arabinose 5-phosphate + phosphoenolpyruvate + H2O = 3-deoxy-alpha-D-manno-2-octulosonate-8-phosphate + phosphate. It participates in carbohydrate biosynthesis; 3-deoxy-D-manno-octulosonate biosynthesis; 3-deoxy-D-manno-octulosonate from D-ribulose 5-phosphate: step 2/3. It functions in the pathway bacterial outer membrane biogenesis; lipopolysaccharide biosynthesis. The polypeptide is 2-dehydro-3-deoxyphosphooctonate aldolase (Rickettsia felis (strain ATCC VR-1525 / URRWXCal2) (Rickettsia azadi)).